Reading from the N-terminus, the 292-residue chain is AKT-interacting protein (292 aa).

Polar residues predominate over residues 1 to 11 (MNPLWSMSSGS). Residues 1-64 (MNPLWSMSSG…SPAPAAQSTN (64 aa)) are disordered. Over residues 14 to 23 (KRAEGEEKTL) the composition is skewed to basic and acidic residues. Position 30 is a phosphoserine (Ser30). In terms of domain architecture, UBC core spans 74-222 (YLEYSLLAEF…VVDSVKVCTA (149 aa)).

This sequence belongs to the ubiquitin-conjugating enzyme family. FTS subfamily. Component of the FTS/Hook/FHIP complex (FHF complex), composed of AKTIP/FTS, FHIP1B, and one or more members of the Hook family of proteins HOOK1, HOOK2, and HOOK3. Interacts directly with HOOK1, HOOK2 and HOOK3. The FHF complex associates with the homotypic vesicular sorting complex (the HOPS complex). Also interacts with AKT1. May interact with FHIP1A.

Its subcellular location is the cytoplasm. The protein localises to the cell membrane. Its function is as follows. Component of the FTS/Hook/FHIP complex (FHF complex). The FHF complex may function to promote vesicle trafficking and/or fusion via the homotypic vesicular protein sorting complex (the HOPS complex). Regulates apoptosis by enhancing phosphorylation and activation of AKT1. Increases release of TNFSF6 via the AKT1/GSK3B/NFATC1 signaling cascade. FHF complex promotes the distribution of AP-4 complex to the perinuclear area of the cell. The sequence is that of AKT-interacting protein (Aktip) from Rattus norvegicus (Rat).